Reading from the N-terminus, the 142-residue chain is Large ribosomal subunit protein uL11 (142 aa).

This sequence belongs to the universal ribosomal protein uL11 family. In terms of assembly, part of the ribosomal stalk of the 50S ribosomal subunit. Interacts with L10 and the large rRNA to form the base of the stalk. L10 forms an elongated spine to which L12 dimers bind in a sequential fashion forming a multimeric L10(L12)X complex. One or more lysine residues are methylated.

In terms of biological role, forms part of the ribosomal stalk which helps the ribosome interact with GTP-bound translation factors. The polypeptide is Large ribosomal subunit protein uL11 (Shewanella halifaxensis (strain HAW-EB4)).